The following is a 309-amino-acid chain: Probable nitrogen assimilation transcriptional activator (309 aa).

The HTH lysR-type domain occupies 1–57; that stretch reads MRLEQLQAFLKVAELGSFQQAALQSEVTQSTISRQIQGLESALKCQLFHRGAQAKLT. A DNA-binding region (H-T-H motif) is located at residues 18–38; it reads FQQAALQSEVTQSTISRQIQG.

The protein belongs to the LysR transcriptional regulatory family.

Seems to regulate utilization of fixed nitrogen by controlling the expression of a certain gene(s) involved in nitrogen metabolism. This is Probable nitrogen assimilation transcriptional activator (ntcB) from Synechocystis sp. (strain ATCC 27184 / PCC 6803 / Kazusa).